Reading from the N-terminus, the 419-residue chain is Dynein regulatory complex protein 9 (419 aa).

Disordered stretches follow at residues 25-45 (TGEP…EETS) and 394-419 (NFKM…RRKK). Residues 30–45 (EAAEEDLDYEEEEETS) show a composition bias toward acidic residues. The 30-residue stretch at 372 to 401 (ELRSIVKLQAWWRGSVVRKEIGNFKMPKKD) folds into the IQ domain. Positions 394–413 (NFKMPKKDKDDSKDSKGKEK) are enriched in basic and acidic residues.

Belongs to the DRC9 family. Component of the nexin-dynein regulatory complex (N-DRC). Interacts (via IQ domain) with CALM when calcium levels are low. Does not interact with CALM in the presence of Ca(2+). Interacts with the HSP70 proteins HSPA1L and HSPA8. May form a complex with CAMK4 and HSP70. As to expression, expressed in the testes (at protein level). Also detected in oviduct (at protein level). Also detected in the trachea.

It localises to the cytoplasm. The protein resides in the cell projection. It is found in the cilium. The protein localises to the flagellum. Its subcellular location is the cytoskeleton. It localises to the flagellum axoneme. In terms of biological role, component of the nexin-dynein regulatory complex (N-DRC), a key regulator of ciliary/flagellar motility which maintains the alignment and integrity of the distal axoneme and regulates microtubule sliding in motile axonemes. Binds calmodulin when cellular Ca(2+) levels are low and thereby contributes to the regulation of calcium and calmodulin-dependent protein kinase IV (CAMK4) activity; contributes to the regulation of CAMK4 signaling cascades. Required for normal axoneme assembly in sperm flagella, normal sperm tail formation and for male fertility. This Mus musculus (Mouse) protein is Dynein regulatory complex protein 9 (Iqcg).